A 332-amino-acid chain; its full sequence is tRNA dimethylallyltransferase (332 aa).

Residue 17–24 (GPTCSGKS) coordinates ATP. 19-24 (TCSGKS) lines the substrate pocket. Interaction with substrate tRNA stretches follow at residues 42 to 45 (DSMQ) and 166 to 170 (QRVAR).

The protein belongs to the IPP transferase family. Monomer. Mg(2+) is required as a cofactor.

It carries out the reaction adenosine(37) in tRNA + dimethylallyl diphosphate = N(6)-dimethylallyladenosine(37) in tRNA + diphosphate. Its function is as follows. Catalyzes the transfer of a dimethylallyl group onto the adenine at position 37 in tRNAs that read codons beginning with uridine, leading to the formation of N6-(dimethylallyl)adenosine (i(6)A). This is tRNA dimethylallyltransferase from Gluconacetobacter diazotrophicus (strain ATCC 49037 / DSM 5601 / CCUG 37298 / CIP 103539 / LMG 7603 / PAl5).